We begin with the raw amino-acid sequence, 191 residues long: Thymidylate kinase (191 aa).

Gly7 to Ser14 lines the ATP pocket.

It belongs to the thymidylate kinase family.

It carries out the reaction dTMP + ATP = dTDP + ADP. In terms of biological role, phosphorylation of dTMP to form dTDP in both de novo and salvage pathways of dTTP synthesis. This Helicobacter pylori (strain HPAG1) protein is Thymidylate kinase.